A 2193-amino-acid chain; its full sequence is Non-reducing polyketide synthase esdpA (2193 aa).

Positions 90-252 (NVLLAPLTVL…AKVQVNGRYH (163 aa)) constitute a Starter acyltransferase (SAT) domain. In terms of domain architecture, Ketosynthase family 3 (KS3) spans 381–797 (DECVAIVGAA…GNNTVIIVCE (417 aa)). Residues Cys-546, His-682, and His-720 each act as for beta-ketoacyl synthase activity in the active site. The Malonyl-CoA:ACP transacylase (MAT) domain occupies 906-1158 (VFSGQSGMTV…YFVDAVRRIK (253 aa)). Catalysis depends on Ser-992, which acts as the For acyl/malonyl transferase activity. An N-terminal hotdog fold region spans residues 1265–1392 (PPMLSLENFS…GRVVLEDRRR (128 aa)). Residues 1265–1569 (PPMLSLENFS…FVKISSHILQ (305 aa)) enclose the PKS/mFAS DH domain. A C-terminal hotdog fold region spans residues 1419-1569 (VFSASGSIAY…FVKISSHILQ (151 aa)). The Proton donor; for dehydratase activity role is filled by Asp-1479. The region spanning 1723-1799 (RILSDSMIKL…ELHDLMQSHP (77 aa)) is the Carrier domain. Ser-1759 is modified (O-(pantetheine 4'-phosphoryl)serine). A methyltransferase (CMeT) domain region spans residues 1944–2177 (YHGSEHKLLR…GFTHVDWSND (234 aa)).

Requires pantetheine 4'-phosphate as cofactor.

Its pathway is secondary metabolite biosynthesis; terpenoid biosynthesis. Functionally, non-reducing polyketide synthase; part of the cluster that mediates the biosynthesis of shearones, diterpenoid pyrones (DPs) which are structurally diverse meroterpenoids consisting of a diterpene linked by a pyrone, and which may exhibit a range of bioactivities. Whitin the pathway, esdpA takes part to the biosynthesis of the molecular scaffold via the production of the alpha-pyrone from one molecule of acetyl-CoA, two molecules of malonyl-CoA and one molecule of S-adenosyl-L-methionine (SAM). The molecular scaffold is commonly biosynthesized by a series of enzymes including the non-reducing polyketide synthase (NR-PKS) esdpA that generates an alpha-pyrone; the prenyltransferase esdpC that attaches a geranylgeranyl pyrophosphate (GGPP) produced by the GGPP synthase (GGPPS) esdpD onto the pyrone unit; the FAD-dependent monooxygenase esdpE that converts an olefin on the diterpene unit into an epoxide; and the terpene cyclase esdpB that catalyzes the cyclization reactions to give the molecular backbone shearone A. In the modification steps, esdpF oxidizes the hydroxy group to a ketone at C-3 and esdpG then attaches hydroxy groups at both C-11 and C-12. After that, esdpI hydroxylates at C-20 and esdpH hydroxylates at C-6'. The ether bridge is generated by nucleophilic attack of the hydroxy group at C-20 to the carbonyl carbon at C-3. EsdpH can also functions prior to esdpI. The different combinations of these modification enzymes lead to the production of diverse shearone derivatives, shearone I being the end product of the pathway. The alpha-ketoglutarate-dependent dioxygenase esdpJ seems not to be involved in this pathway. This Penicillium shearii (Eupenicillium shearii) protein is Non-reducing polyketide synthase esdpA.